Reading from the N-terminus, the 298-residue chain is MNPGYRGRFAPSPTGPLHFGSLVGALASWLDARAHGGTWLVRIEDLDGPRTVPGAADDILATLAHFGMTPDEPPIWQSTRDAAYTAALERLVAAGLVYPCGCTRKEIADSLRAAHERHTTLAYPGTCRTGLHGKPARAWRLRVPDGNDAVVTFDDRWQHAQSQNLATEVGDFVLKRADGQWAYQLAVVVDDADAGITHVVRGADLLDSTARQIYLQRCLGVPTPAYLHVPVVVDANGEKLSKQTGATALERDDPLPALRAAAAHLGLAADGDRPVHTIDAFYAAATDAWARRFGPRAG.

L-glutamate-binding positions include 8-12 (RFAPS) and glutamate 44. A 'HIGH' region motif is present at residues 11–21 (PSPTGPLHFGS). Positions 100, 102, 123, and 127 each coordinate Zn(2+). Positions 183 and 201 each coordinate L-glutamate. The 'KMSKS' region motif lies at 239–243 (KLSKQ). Residue lysine 242 participates in ATP binding.

This sequence belongs to the class-I aminoacyl-tRNA synthetase family. GluQ subfamily. Requires Zn(2+) as cofactor.

In terms of biological role, catalyzes the tRNA-independent activation of glutamate in presence of ATP and the subsequent transfer of glutamate onto a tRNA(Asp). Glutamate is transferred on the 2-amino-5-(4,5-dihydroxy-2-cyclopenten-1-yl) moiety of the queuosine in the wobble position of the QUC anticodon. The chain is Glutamyl-Q tRNA(Asp) synthetase from Burkholderia cenocepacia (strain ATCC BAA-245 / DSM 16553 / LMG 16656 / NCTC 13227 / J2315 / CF5610) (Burkholderia cepacia (strain J2315)).